Consider the following 176-residue polypeptide: NADH-quinone oxidoreductase subunit I 2 (176 aa).

4Fe-4S ferredoxin-type domains lie at 45–77 (IVLT…MEAA) and 87–116 (RWFR…MTPD). [4Fe-4S] cluster-binding residues include C57, C60, C63, C67, C96, C99, C102, and C106.

Belongs to the complex I 23 kDa subunit family. As to quaternary structure, NDH-1 is composed of 14 different subunits. Subunits NuoA, H, J, K, L, M, N constitute the membrane sector of the complex. Requires [4Fe-4S] cluster as cofactor.

The protein resides in the cell inner membrane. It carries out the reaction a quinone + NADH + 5 H(+)(in) = a quinol + NAD(+) + 4 H(+)(out). Functionally, NDH-1 shuttles electrons from NADH, via FMN and iron-sulfur (Fe-S) centers, to quinones in the respiratory chain. The immediate electron acceptor for the enzyme in this species is believed to be ubiquinone. Couples the redox reaction to proton translocation (for every two electrons transferred, four hydrogen ions are translocated across the cytoplasmic membrane), and thus conserves the redox energy in a proton gradient. This is NADH-quinone oxidoreductase subunit I 2 from Geobacter sulfurreducens (strain ATCC 51573 / DSM 12127 / PCA).